A 449-amino-acid polypeptide reads, in one-letter code: Chitobiosyldiphosphodolichol beta-mannosyltransferase (449 aa).

The Lumenal segment spans residues 1-7 (MFLEIPR). The helical transmembrane segment at 8-28 (WLLALIILYLSIPLVVYYVIP) threads the bilayer. A Dolichol recognition motif is present at residues 21 to 32 (LVVYYVIPYLFY). At 29–104 (YLFYGNKSTK…SNLKRKGGGT (76 aa)) the chain is on the cytoplasmic side. Residues 105–125 (SVIFMVKKVLFQVLSIFKLLW) constitute an intramembrane region (helical). Residues 126 to 449 (ELRGSDYILV…RTMRDLKLIH (324 aa)) are Cytoplasmic-facing. The tract at residues 435–449 (QSNWERTMRDLKLIH) is required for oligomerization.

The protein belongs to the glycosyltransferase group 1 family. Glycosyltransferase 33 subfamily. Homodimer. ALG1 forms mannosyltransferases (MT) heteromeric complexes with either ALG2 or ALG11.

It localises to the endoplasmic reticulum membrane. The enzyme catalyses an N,N'-diacetylchitobiosyl-diphospho-di-trans,poly-cis-dolichol + GDP-alpha-D-mannose = a beta-D-Man-(1-&gt;4)-beta-D-GlcNAc-(1-&gt;4)-alpha-D-GlcNAc-diphospho-di-trans,poly-cis-dolichol + GDP + H(+). The protein operates within protein modification; protein glycosylation. Its function is as follows. Participates in the formation of the lipid-linked precursor oligosaccharide for N-glycosylation. Involved in assembling the dolichol-pyrophosphate-GlcNAc(2)-Man(5) intermediate on the cytoplasmic surface of the ER. This chain is Chitobiosyldiphosphodolichol beta-mannosyltransferase (ALG1), found in Saccharomyces cerevisiae (strain ATCC 204508 / S288c) (Baker's yeast).